The primary structure comprises 72 residues: Translation initiation factor IF-1 (72 aa).

The 72-residue stretch at 1 to 72 (MSKSDIIEMQ…TRGRITWRAK (72 aa)) folds into the S1-like domain.

It belongs to the IF-1 family. As to quaternary structure, component of the 30S ribosomal translation pre-initiation complex which assembles on the 30S ribosome in the order IF-2 and IF-3, IF-1 and N-formylmethionyl-tRNA(fMet); mRNA recruitment can occur at any time during PIC assembly.

Its subcellular location is the cytoplasm. Functionally, one of the essential components for the initiation of protein synthesis. Stabilizes the binding of IF-2 and IF-3 on the 30S subunit to which N-formylmethionyl-tRNA(fMet) subsequently binds. Helps modulate mRNA selection, yielding the 30S pre-initiation complex (PIC). Upon addition of the 50S ribosomal subunit IF-1, IF-2 and IF-3 are released leaving the mature 70S translation initiation complex. In Clostridium perfringens (strain 13 / Type A), this protein is Translation initiation factor IF-1.